The chain runs to 285 residues: Bifunctional protein FolD (285 aa).

Residues G164–S166, I189, and I230 each bind NADP(+).

This sequence belongs to the tetrahydrofolate dehydrogenase/cyclohydrolase family. Homodimer.

It carries out the reaction (6R)-5,10-methylene-5,6,7,8-tetrahydrofolate + NADP(+) = (6R)-5,10-methenyltetrahydrofolate + NADPH. The catalysed reaction is (6R)-5,10-methenyltetrahydrofolate + H2O = (6R)-10-formyltetrahydrofolate + H(+). Its pathway is one-carbon metabolism; tetrahydrofolate interconversion. Functionally, catalyzes the oxidation of 5,10-methylenetetrahydrofolate to 5,10-methenyltetrahydrofolate and then the hydrolysis of 5,10-methenyltetrahydrofolate to 10-formyltetrahydrofolate. This chain is Bifunctional protein FolD, found in Sulfurimonas denitrificans (strain ATCC 33889 / DSM 1251) (Thiomicrospira denitrificans (strain ATCC 33889 / DSM 1251)).